Reading from the N-terminus, the 2215-residue chain is Unconventional myosin-VIIa (2215 aa).

Positions 65–741 (HGVEDMIRLG…HDMLLEVERD (677 aa)) constitute a Myosin motor domain. An ATP-binding site is contributed by 158–165 (GESGAGKT). Residues 632–639 (FVRCIKPN) are actin-binding. 5 consecutive IQ domains span residues 745-765 (TDRV…SNFL), 768-788 (KNAA…KNYG), 791-811 (RLGF…QQYR), 814-834 (RQRI…KAFR), and 837-857 (LWAV…RLHQ). An SAH region spans residues 858–935 (RLRAEYLWRL…LEQMERARHE (78 aa)). The region spanning 1017-1253 (YTRRPLKQPL…PSWLELQATK (237 aa)) is the MyTH4 1 domain. An FERM 1 domain is found at 1258 to 1602 (IMLPVTFMDG…LVVTFLEGLR (345 aa)). Ser-1569 is modified (phosphoserine). Position 1571 is a phosphothreonine (Thr-1571). An SH3 domain is found at 1603-1672 (KRSKYVVALQ…PTDSVYVMPT (70 aa)). In terms of domain architecture, MyTH4 2 spans 1747–1896 (HTREPLKQAL…PHLVEVEAIQ (150 aa)). Residues 1902-2205 (IFHKVYFPDD…SYISQMLTAM (304 aa)) enclose the FERM 2 domain.

Belongs to the TRAFAC class myosin-kinesin ATPase superfamily. Myosin family. As to quaternary structure, might homodimerize in a two headed molecule through the formation of a coiled-coil rod. Identified in a complex with USH1C and USH1G. Interacts with MYRIP. Interacts with RPE65. Interacts with CIB2. May interact with CALM. Interacts with WHRN. Interacts with PLEKHB1 (via PH domain). Interacts with PCDH15. Interacts with TWF2. Interacts with USH1G. Interacts with MYH9. Interacts (via MyTH4-FERM domains) with cytoplasmic regions of ADGRV1 and USH2A. Interacts with PDZD7 (via MyTH4-FERM domains). Interacts with CALML4. As to expression, expressed in the pigment epithelium and the photoreceptor cells of the retina. Also found in kidney, liver, testis, cochlea, lymphocytes. Not expressed in brain.

The protein localises to the cytoplasm. Its subcellular location is the cell cortex. It localises to the cytoskeleton. The protein resides in the synapse. ATP hydrolysis is inhibited by Mg(2+), already at a concentration of 0.4 mM. In terms of biological role, myosins are actin-based motor molecules with ATPase activity. Unconventional myosins serve in intracellular movements. Their highly divergent tails bind to membranous compartments, which are then moved relative to actin filaments. In the retina, plays an important role in the renewal of the outer photoreceptor disks. Plays an important role in the distribution and migration of retinal pigment epithelial (RPE) melanosomes and phagosomes, and in the regulation of opsin transport in retinal photoreceptors. In the inner ear, plays an important role in differentiation, morphogenesis and organization of cochlear hair cell bundles. Involved in hair-cell vesicle trafficking of aminoglycosides, which are known to induce ototoxicity. Motor protein that is a part of the functional network formed by USH1C, USH1G, CDH23 and MYO7A that mediates mechanotransduction in cochlear hair cells. Required for normal hearing. In Homo sapiens (Human), this protein is Unconventional myosin-VIIa.